The sequence spans 181 residues: 6,7-dimethyl-8-ribityllumazine synthase (181 aa).

5-amino-6-(D-ribitylamino)uracil-binding positions include Phe23, 61–63 (SFE), and 85–87 (AVI). Residue 90-91 (QT) coordinates (2S)-2-hydroxy-3-oxobutyl phosphate. The active-site Proton donor is the His93. Position 118 (Phe118) interacts with 5-amino-6-(D-ribitylamino)uracil. Arg132 lines the (2S)-2-hydroxy-3-oxobutyl phosphate pocket.

This sequence belongs to the DMRL synthase family.

It catalyses the reaction (2S)-2-hydroxy-3-oxobutyl phosphate + 5-amino-6-(D-ribitylamino)uracil = 6,7-dimethyl-8-(1-D-ribityl)lumazine + phosphate + 2 H2O + H(+). It participates in cofactor biosynthesis; riboflavin biosynthesis; riboflavin from 2-hydroxy-3-oxobutyl phosphate and 5-amino-6-(D-ribitylamino)uracil: step 1/2. Its function is as follows. Catalyzes the formation of 6,7-dimethyl-8-ribityllumazine by condensation of 5-amino-6-(D-ribitylamino)uracil with 3,4-dihydroxy-2-butanone 4-phosphate. This is the penultimate step in the biosynthesis of riboflavin. This chain is 6,7-dimethyl-8-ribityllumazine synthase, found in Synechococcus elongatus (strain ATCC 33912 / PCC 7942 / FACHB-805) (Anacystis nidulans R2).